Here is a 299-residue protein sequence, read N- to C-terminus: Probable lipid kinase YegS (299 aa).

Residues 2-133 form the DAGKc domain; it reads AEFPASLLIL…IDMAQVNKQT (132 aa). Residues T40, 66 to 72, and T95 contribute to the ATP site; that span reads GDGTINE. Positions 215, 218, and 220 each coordinate Mg(2+). E271 acts as the Proton acceptor in catalysis.

This sequence belongs to the diacylglycerol/lipid kinase family. YegS lipid kinase subfamily. It depends on Mg(2+) as a cofactor. Ca(2+) serves as cofactor.

Its subcellular location is the cytoplasm. Its function is as follows. Probably phosphorylates lipids; the in vivo substrate is unknown. This is Probable lipid kinase YegS from Shigella dysenteriae serotype 1 (strain Sd197).